We begin with the raw amino-acid sequence, 172 residues long: Peptidyl-prolyl cis-trans isomerase (172 aa).

Positions 7 to 170 constitute a PPIase cyclophilin-type domain; it reads FFDMTVGGAP…KVVKVADCGQ (164 aa).

This sequence belongs to the cyclophilin-type PPIase family.

The protein resides in the cytoplasm. It carries out the reaction [protein]-peptidylproline (omega=180) = [protein]-peptidylproline (omega=0). Its activity is regulated as follows. Binds cyclosporin A (CsA). CsA mediates some of its effects via an inhibitory action on PPIase. PPIases accelerate the folding of proteins. It catalyzes the cis-trans isomerization of proline imidic peptide bonds in oligopeptides. The sequence is that of Peptidyl-prolyl cis-trans isomerase (CYP) from Zea mays (Maize).